The sequence spans 188 residues: Threonylcarbamoyl-AMP synthase (188 aa).

Residues 3–188 form the YrdC-like domain; the sequence is QLHPSDIKDI…RSGKILRNGQ (186 aa).

This sequence belongs to the SUA5 family. TsaC subfamily.

Its subcellular location is the cytoplasm. The catalysed reaction is L-threonine + hydrogencarbonate + ATP = L-threonylcarbamoyladenylate + diphosphate + H2O. Its function is as follows. Required for the formation of a threonylcarbamoyl group on adenosine at position 37 (t(6)A37) in tRNAs that read codons beginning with adenine. Catalyzes the conversion of L-threonine, HCO(3)(-)/CO(2) and ATP to give threonylcarbamoyl-AMP (TC-AMP) as the acyladenylate intermediate, with the release of diphosphate. The sequence is that of Threonylcarbamoyl-AMP synthase from Shewanella putrefaciens (strain CN-32 / ATCC BAA-453).